A 135-amino-acid polypeptide reads, in one-letter code: Large ribosomal subunit protein uL16c (135 aa).

The protein belongs to the universal ribosomal protein uL16 family. In terms of assembly, part of the 50S ribosomal subunit.

The protein localises to the plastid. It localises to the chloroplast. The polypeptide is Large ribosomal subunit protein uL16c (Panax ginseng (Korean ginseng)).